The primary structure comprises 445 residues: Nuclear envelope integral membrane protein 1 (445 aa).

An N-terminal signal peptide occupies residues 1–44 (MAGGMKVAVLPAVGAGPWSWGAGGCGAVRLLLVLFGCFVCGSAG). Residue N125 is glycosylated (N-linked (GlcNAc...) asparagine). 5 consecutive transmembrane segments (helical) span residues 161 to 181 (PKLF…DLLS), 186 to 206 (FYYS…IIFI), 216 to 236 (PIYI…QLVF), 245 to 265 (CYWQ…FAVC), and 289 to 309 (LCFM…VVIA). An a; required for its colocalization with lamins at the nuclear envelope region spans residues 186-297 (FYYSTGMSVG…GLCFMYSSIQ (112 aa)). The tract at residues 336-405 (TVPPRLLTEE…LTPNEVSVHE (70 aa)) is b; required for interaction with RAN-GTP. The interval 336-445 (TVPPRLLTEE…LVVQQNSFLT (110 aa)) is required for nuclear localization. Residues S368, S424, and S425 each carry the phosphoserine modification. Acidic residues predominate over residues 418-430 (ELSEETSSEEEDS). The tract at residues 418-445 (ELSEETSSEEEDSDSRYPLVVQQNSFLT) is disordered.

This sequence belongs to the NEMP family. In terms of assembly, homooligomer. Interacts with RAN-GTP. Interacts with EMD. Post-translationally, phosphorylation may regulate its interaction with RAN-GTP.

The protein resides in the nucleus inner membrane. Its subcellular location is the nucleus envelope. In terms of biological role, together with EMD, contributes to nuclear envelope stiffness in germ cells. Required for female fertility. Essential for normal erythropoiesis. Required for efficient nuclear envelope opening and enucleation during the late stages of erythroblast maturation. This chain is Nuclear envelope integral membrane protein 1 (NEMP1), found in Bos taurus (Bovine).